A 590-amino-acid polypeptide reads, in one-letter code: Bacillolysin (590 aa).

A signal peptide spans 1-24 (MKKVWFSLLGGAMLLGSVASGASA). A propeptide spans 25 to 286 (ESSVSGPAQL…GSIVFQYDII (262 aa)) (activation peptide). Ca(2+) is bound by residues Asp339, Asp341, and Asp419. Position 423 (His423) interacts with Zn(2+). Glu424 is an active-site residue. Zn(2+) contacts are provided by His427 and Glu447. Asp466, Tyr469, Thr470, Ile473, and Asp476 together coordinate Ca(2+). His507 acts as the Proton donor in catalysis.

It belongs to the peptidase M4 family. The cofactor is Ca(2+). Zn(2+) is required as a cofactor.

The protein resides in the secreted. It carries out the reaction Similar, but not identical, to that of thermolysin.. Functionally, involved in the generation of beta- and alpha-amylases from the large amylase precursor. The polypeptide is Bacillolysin (npr) (Paenibacillus polymyxa (Bacillus polymyxa)).